Consider the following 216-residue polypeptide: CsgBAC operon transcriptional regulatory protein (216 aa).

Residues 149–214 form the HTH luxR-type domain; the sequence is NSTESALLTH…QAVSWANDNL (66 aa). Residues 173 to 192 constitute a DNA-binding region (H-T-H motif); it reads NNEIARSLFISENTVKTHLY.

The protein localises to the cell inner membrane. Its function is as follows. The master regulator for adhesive curli fimbriae expression; necessary for transcription of the csgBAC/ymdA operon. Plays a positive role in biofilm formation. May have the capability to respond to starvation and/or high cell density by activating csgBA transcription. Low-level constitutive expression confers an adherent curli fimbriae-expressing phenotype, up-regulates 10 genes and down-regulates 14 others. The sequence is that of CsgBAC operon transcriptional regulatory protein (csgD) from Escherichia coli (strain K12).